The primary structure comprises 2529 residues: Zinc finger FYVE domain-containing protein 26 (2529 aa).

Disordered stretches follow at residues 584 to 650, 689 to 709, and 733 to 810; these read HLPE…PGPH, SSHR…SAAR, and VTSN…RFQT. Residues serine 605 and serine 609 each carry the phosphoserine modification. Residues 689–701 are compositionally biased toward basic and acidic residues; it reads SSHRTPEETKLPE. Residues 755-765 are compositionally biased toward basic residues; sequence SSLRRGRRTRR. Residues 778–796 show a composition bias toward low complexity; the sequence is SLEGTSSELSTSTSEGSLS. The residue at position 791 (serine 791) is a Phosphoserine. The span at 797–810 shows a compositional bias: polar residues; that stretch reads AVSGQVESDSRFQT. The stretch at 859-884 forms a coiled coil; sequence MFVERYQEVIQELARVEHKIENQNSD. The disordered stretch occupies residues 1258–1286; that stretch reads GLPLSTLGSPRPSENPSAERKSHSSPKDS. Residues 1263-1273 show a composition bias toward polar residues; it reads TLGSPRPSENP. Over residues 1274 to 1283 the composition is skewed to basic and acidic residues; it reads SAERKSHSSP. A coiled-coil region spans residues 1488 to 1515; that stretch reads VSDMAVQEELKSELQRKLMELRVYQKIL. Serine 1732, serine 1754, serine 1770, and serine 1772 each carry phosphoserine. The segment at 1762–1799 is disordered; it reads APGSALVRSPSPKERAFPQTQPPVEFVPPETPPARDQW. An FYVE-type zinc finger spans residues 1802-1862; sequence DETESVCMVC…VCDQCYSYYN (61 aa). Residues cysteine 1808, cysteine 1811, cysteine 1825, cysteine 1828, cysteine 1833, cysteine 1836, cysteine 1854, and cysteine 1857 each contribute to the Zn(2+) site. A disordered region spans residues 1865–1884; that stretch reads TPEESPCQSEVPDSAKNESP.

It belongs to the ZFYVE26 family. Interacts with AP5Z1, AP5B1, AP5S1 and SPG11. Interacts with TTC19 and KIF13A.

It localises to the cytoplasm. It is found in the cytoskeleton. The protein resides in the microtubule organizing center. Its subcellular location is the centrosome. The protein localises to the midbody. Phosphatidylinositol 3-phosphate-binding protein required for the abscission step in cytokinesis: recruited to the midbody during cytokinesis and acts as a regulator of abscission. May also be required for efficient homologous recombination DNA double-strand break repair. The sequence is that of Zinc finger FYVE domain-containing protein 26 (Zfyve26) from Mus musculus (Mouse).